Reading from the N-terminus, the 318-residue chain is Small ribosomal subunit protein mS26 (318 aa).

Residues 295–318 are disordered; that stretch reads IDSKLNPTSNGAGNNGNNNNTTNL. Residues 300–318 are compositionally biased toward low complexity; sequence NPTSNGAGNNGNNNNTTNL.

This sequence belongs to the mitochondrion-specific ribosomal protein mS26 family. In terms of assembly, component of the mitochondrial small ribosomal subunit (mt-SSU). Mature yeast 74S mitochondrial ribosomes consist of a small (37S) and a large (54S) subunit. The 37S small subunit contains a 15S ribosomal RNA (15S mt-rRNA) and 34 different proteins. The 54S large subunit contains a 21S rRNA (21S mt-rRNA) and 46 different proteins.

It localises to the mitochondrion. In terms of biological role, component of the mitochondrial ribosome (mitoribosome), a dedicated translation machinery responsible for the synthesis of mitochondrial genome-encoded proteins, including at least some of the essential transmembrane subunits of the mitochondrial respiratory chain. The mitoribosomes are attached to the mitochondrial inner membrane and translation products are cotranslationally integrated into the membrane. This is Small ribosomal subunit protein mS26 (PET123) from Saccharomyces cerevisiae (strain ATCC 204508 / S288c) (Baker's yeast).